Here is a 369-residue protein sequence, read N- to C-terminus: Peptidyl-prolyl cis-trans isomerase D (369 aa).

Residues 8–173 (YFDLSIGGKP…ADVRIDACGI (166 aa)) enclose the PPIase cyclophilin-type domain. TPR repeat units lie at residues 218–251 (VEAV…LQEY), 269–302 (VAVH…AADD), and 306–339 (AKAL…QPGD).

The protein belongs to the cyclophilin-type PPIase family. PPIase D subfamily.

The protein localises to the cytoplasm. It catalyses the reaction [protein]-peptidylproline (omega=180) = [protein]-peptidylproline (omega=0). Functionally, PPIases accelerate the folding of proteins. It catalyzes the cis-trans isomerization of proline imidic peptide bonds in oligopeptides. In Eremothecium gossypii (strain ATCC 10895 / CBS 109.51 / FGSC 9923 / NRRL Y-1056) (Yeast), this protein is Peptidyl-prolyl cis-trans isomerase D (CPR6).